A 550-amino-acid chain; its full sequence is Arginine--tRNA ligase (550 aa).

Positions 130–140 (ANPTGPIHLGG) match the 'HIGH' region motif.

This sequence belongs to the class-I aminoacyl-tRNA synthetase family. Monomer.

The protein localises to the cytoplasm. It carries out the reaction tRNA(Arg) + L-arginine + ATP = L-arginyl-tRNA(Arg) + AMP + diphosphate. The polypeptide is Arginine--tRNA ligase (Corynebacterium glutamicum (strain R)).